Reading from the N-terminus, the 152-residue chain is Small ribosomal subunit protein uS13 (152 aa).

It belongs to the universal ribosomal protein uS13 family. Part of the 30S ribosomal subunit. Forms a loose heterodimer with protein S19. Forms two bridges to the 50S subunit in the 70S ribosome.

Its function is as follows. Located at the top of the head of the 30S subunit, it contacts several helices of the 16S rRNA. In the 70S ribosome it contacts the 23S rRNA (bridge B1a) and protein L5 of the 50S subunit (bridge B1b), connecting the 2 subunits; these bridges are implicated in subunit movement. The chain is Small ribosomal subunit protein uS13 from Pyrobaculum aerophilum (strain ATCC 51768 / DSM 7523 / JCM 9630 / CIP 104966 / NBRC 100827 / IM2).